Consider the following 152-residue polypeptide: Regulatory protein RecX (152 aa).

Belongs to the RecX family.

The protein localises to the cytoplasm. Functionally, modulates RecA activity. This Haemophilus influenzae (strain PittGG) protein is Regulatory protein RecX.